A 537-amino-acid chain; its full sequence is MSILSLVEDRPTPKEVYNWKIYLLAAVASCTSCMIGYDSAFIGTTISLQSFKDEFDWDSMSAAHQDLVSSNIVSLYQAGAFFGAFFAYPIGHFWGRKWGLMVSALIFTLGAGIMLGTNGDRGFGLLYGGRVLAGLGVGAGSNITPIYISELSPPAIRGRLVGVYELGWQIGGLVGFWICYGVDETLPPSHKQWIIPFAVQLIPSGLLIIGALFLKESPRWLFLRGRREEAIKNLCWIRQLPEDHVYMIEEIGAIDQTLEHQRATIGLGFWKPFAAAWTNKKILYRLFLGSMLFFWQNGSGINAINYYSPTVFKSIGVTGSNTSLFTTGIFGVVKTVVTFIWLLWLIDRVGRRLLLLIGAAGGSICLWIVGAYIKIARPSERENKQMDGGGIAAMFFFYLWTVFYTPSWNGTPWVINSEMFDPNIRSLAQACAAGSNWLWNFLISRFTPQMFAKMDYGVYFFFASLMILSIIFVFFLIPETKGIPLESMDRLFETQPIWRAHGTLLKQIREDEERFRHDLEDSGFVKSTDRQVEVVDA.

The Cytoplasmic segment spans residues 1–22 (MSILSLVEDRPTPKEVYNWKIY). A helical membrane pass occupies residues 23–43 (LLAAVASCTSCMIGYDSAFIG). The Extracellular portion of the chain corresponds to 44-74 (TTISLQSFKDEFDWDSMSAAHQDLVSSNIVS). Residues 75–95 (LYQAGAFFGAFFAYPIGHFWG) form a helical membrane-spanning segment. The Cytoplasmic portion of the chain corresponds to 96–97 (RK). Residues 98–118 (WGLMVSALIFTLGAGIMLGTN) traverse the membrane as a helical segment. The Extracellular segment spans residues 119–130 (GDRGFGLLYGGR). Residues 131 to 151 (VLAGLGVGAGSNITPIYISEL) form a helical membrane-spanning segment. Residues 152-159 (SPPAIRGR) are Cytoplasmic-facing. The chain crosses the membrane as a helical span at residues 160-180 (LVGVYELGWQIGGLVGFWICY). The Extracellular segment spans residues 181–193 (GVDETLPPSHKQW). A helical membrane pass occupies residues 194–214 (IIPFAVQLIPSGLLIIGALFL). The Cytoplasmic portion of the chain corresponds to 215-285 (KESPRWLFLR…AWTNKKILYR (71 aa)). The chain crosses the membrane as a helical span at residues 286–306 (LFLGSMLFFWQNGSGINAINY). Residues 307–325 (YSPTVFKSIGVTGSNTSLF) are Extracellular-facing. Residues 326–346 (TTGIFGVVKTVVTFIWLLWLI) form a helical membrane-spanning segment. The Cytoplasmic segment spans residues 347–352 (DRVGRR). The chain crosses the membrane as a helical span at residues 353–373 (LLLLIGAAGGSICLWIVGAYI). Over 374-387 (KIARPSERENKQMD) the chain is Extracellular. The chain crosses the membrane as a helical span at residues 388–408 (GGGIAAMFFFYLWTVFYTPSW). Residues 409–456 (NGTPWVINSEMFDPNIRSLAQACAAGSNWLWNFLISRFTPQMFAKMDY) are Cytoplasmic-facing. A helical transmembrane segment spans residues 457–477 (GVYFFFASLMILSIIFVFFLI). Topologically, residues 478–537 (PETKGIPLESMDRLFETQPIWRAHGTLLKQIREDEERFRHDLEDSGFVKSTDRQVEVVDA) are extracellular.

It belongs to the major facilitator superfamily. Sugar transporter (TC 2.A.1.1) family. As to quaternary structure, interacts with creB. In terms of processing, ubiquitinated. Deubiquitinated by creB, probably to control its activity or amount.

The protein localises to the cell membrane. Functionally, integral membrane transporter that imports quinic acid to be catabolized as a carbon source. This is Probable quinate permease (qutD) from Aspergillus flavus (strain ATCC 200026 / FGSC A1120 / IAM 13836 / NRRL 3357 / JCM 12722 / SRRC 167).